Consider the following 274-residue polypeptide: MAAAQTSPAATLVDVLTKPWSLDQTDSYMSTFVPLSYKIMIGYLVTIYFGQKLMAHRKPFDLQNTLALWNFGFSLFSGIAAYKLIPELFGVFMKDGFVASYCQNENYYTDASTGFWGWAFVMSKAPELGDTMFLVLRKKPVIFMHWYHHALTFVYAVVTYSEHQAWARWSLALNLAVHTVMYFYFAVRALNIQTPRPVAKFITTIQIVQFVISCYIFGHLVFIKSADSVPGCAVSWNVLSIGGLMYISYLFLFAKFFYKAYIQKRSPTKTSKQE.

7 helical membrane-spanning segments follow: residues 29–49, 73–93, 115–135, 140–160, 170–190, 201–221, and 238–258; these read MSTF…TIYF, FSLF…GVFM, FWGW…MFLV, PVIF…VVTY, SLAL…VRAL, FITT…GHLV, and VLSI…KFFY.

Belongs to the ELO family. As to expression, expressed in various tissues and parts of the body, including the ventral cord, pharyngeal muscles, uterus, and the tail, and most strongly in intestinal cells.

Its subcellular location is the membrane. It catalyses the reaction hexadecanoyl-CoA + malonyl-CoA + H(+) = 3-oxooctadecanoyl-CoA + CO2 + CoA. Its pathway is lipid metabolism; fatty acid biosynthesis. In terms of biological role, catalyzes the first and rate-limiting reaction of the four reactions that constitute the long-chain fatty acids elongation cycle. Uses malonyl-CoA to add 2 carbons per cycle to the chain of long-chain fatty acids. Condensing enzyme responsible for the elongation of palmitate (hexadecanoate, 16:0), also involved in polyunsaturated fatty acid (PUFA) biosynthesis. The sequence is that of Long chain fatty acid elongase 2 from Caenorhabditis elegans.